A 145-amino-acid chain; its full sequence is Ribosome maturation factor RimP (145 aa).

It belongs to the RimP family.

The protein localises to the cytoplasm. Its function is as follows. Required for maturation of 30S ribosomal subunits. The protein is Ribosome maturation factor RimP of Borreliella burgdorferi (strain ZS7) (Borrelia burgdorferi).